The primary structure comprises 1399 residues: FYVE, RhoGEF and PH domain-containing protein 6 (1399 aa).

6 disordered regions span residues 1-99 (MTSA…KDVR), 138-164 (MKEN…SEKC), 185-210 (LTQQ…NGDH), 235-281 (AHHN…DGIS), 299-341 (YTSK…NGSS), and 367-479 (PVDE…KKPQ). Residues 50–60 (PAIAPKPKVPT) are compositionally biased toward low complexity. Residues 259-276 (AESRGHTDSCEPENKRVA) show a composition bias toward basic and acidic residues. The span at 307 to 321 (KPRKTHAAARLRRQK) shows a compositional bias: basic residues. Polar residues-rich tracts occupy residues 332-341 (EPGNSNNGSS) and 377-402 (RALT…QQTP). Positions 403–418 (SLDTDSSLTSDSSGSG) are enriched in low complexity. Positions 428–453 (TYTQCSTQPLSLPKQVTSACTDQPPA) are enriched in polar residues. Phosphoserine occurs at positions 494, 531, and 583. A disordered region spans residues 515–542 (RNYLHHPGPPNHGASASPFDMPNPTSEK). Disordered regions lie at residues 631–650 (QHGD…GLES) and 657–678 (TGEE…SLES). Phosphoserine is present on residues Ser670 and Ser697. The tract at residues 768–840 (APDGQLQLDP…KQDEDAGMKS (73 aa)) is disordered. Acidic residues predominate over residues 802–817 (PSDEEVINSSDEDDVS). A compositionally biased stretch (basic and acidic residues) spans 821-838 (SKGEPDPLEDKQDEDAGM). The region spanning 841–1030 (KVHHIAKEIM…IEVANHANDT (190 aa)) is the DH domain. A PH 1 domain is found at 1059–1153 (VFLKEGTLMK…WLEAISSSIE (95 aa)). Residue Ser1167 is modified to Phosphoserine. An FYVE-type zinc finger spans residues 1191–1250 (DTRATMCMICTSEFTLTWRRHHCRACGKIVCQACSSNKYGLDYLKGQLARVCEHCFQELQ). Cys1197, Cys1200, Cys1213, Cys1216, Cys1221, Cys1224, Cys1242, and Cys1245 together coordinate Zn(2+). Residues 1302–1398 (DSTMSGYLYR…WIDAFQEGTV (97 aa)) enclose the PH 2 domain.

The protein localises to the cytoplasm. Its subcellular location is the cytoskeleton. Functionally, may activate CDC42, a member of the Ras-like family of Rho- and Rac proteins, by exchanging bound GDP for free GTP. May play a role in regulating the actin cytoskeleton and cell shape. In Mus musculus (Mouse), this protein is FYVE, RhoGEF and PH domain-containing protein 6 (Fgd6).